The following is a 214-amino-acid chain: Octanoyltransferase (214 aa).

The 177-residue stretch at 35 to 211 (KSNIDFIWLG…IIQEEFYFNF (177 aa)) folds into the BPL/LPL catalytic domain. Substrate-binding positions include 75–82 (RGGEVTCH), 142–144 (SIG), and 155–157 (GFS). C173 (acyl-thioester intermediate) is an active-site residue.

Belongs to the LipB family.

The protein resides in the cytoplasm. The enzyme catalyses octanoyl-[ACP] + L-lysyl-[protein] = N(6)-octanoyl-L-lysyl-[protein] + holo-[ACP] + H(+). Its pathway is protein modification; protein lipoylation via endogenous pathway; protein N(6)-(lipoyl)lysine from octanoyl-[acyl-carrier-protein]: step 1/2. In terms of biological role, catalyzes the transfer of endogenously produced octanoic acid from octanoyl-acyl-carrier-protein onto the lipoyl domains of lipoate-dependent enzymes. Lipoyl-ACP can also act as a substrate although octanoyl-ACP is likely to be the physiological substrate. The polypeptide is Octanoyltransferase (Prochlorococcus marinus (strain MIT 9515)).